Reading from the N-terminus, the 212-residue chain is Peptide methionine sulfoxide reductase MsrA (212 aa).

Residue cysteine 51 is part of the active site.

Belongs to the MsrA Met sulfoxide reductase family.

It catalyses the reaction L-methionyl-[protein] + [thioredoxin]-disulfide + H2O = L-methionyl-(S)-S-oxide-[protein] + [thioredoxin]-dithiol. It carries out the reaction [thioredoxin]-disulfide + L-methionine + H2O = L-methionine (S)-S-oxide + [thioredoxin]-dithiol. In terms of biological role, has an important function as a repair enzyme for proteins that have been inactivated by oxidation. Catalyzes the reversible oxidation-reduction of methionine sulfoxide in proteins to methionine. The polypeptide is Peptide methionine sulfoxide reductase MsrA (Vibrio cholerae serotype O1 (strain ATCC 39541 / Classical Ogawa 395 / O395)).